Here is a 458-residue protein sequence, read N- to C-terminus: Na(+)/H(+) antiporter NhaA (458 aa).

12 helical membrane passes run 27–47 (FLHV…AALI), 78–98 (LHFW…GMEI), 114–134 (ILPI…YLSF), 143–163 (GWAV…ALLG), 172–192 (VILL…IAFF), 201–221 (GLAI…IGLA), 222–242 (SAWL…ITGV), 249–269 (VILG…PLTI), 316–336 (PWVA…VSFA), 346–366 (FLVV…GIIT), 388–408 (ILLI…VSML), and 421–441 (IGVL…GLIY).

Belongs to the NhaA Na(+)/H(+) (TC 2.A.33) antiporter family.

The protein resides in the cell inner membrane. It carries out the reaction Na(+)(in) + 2 H(+)(out) = Na(+)(out) + 2 H(+)(in). In terms of biological role, na(+)/H(+) antiporter that extrudes sodium in exchange for external protons. The protein is Na(+)/H(+) antiporter NhaA of Bartonella quintana (strain Toulouse) (Rochalimaea quintana).